A 90-amino-acid chain; its full sequence is Cell division topological specificity factor (90 aa).

Belongs to the MinE family.

In terms of biological role, prevents the cell division inhibition by proteins MinC and MinD at internal division sites while permitting inhibition at polar sites. This ensures cell division at the proper site by restricting the formation of a division septum at the midpoint of the long axis of the cell. This Francisella philomiragia subsp. philomiragia (strain ATCC 25017 / CCUG 19701 / FSC 153 / O#319-036) protein is Cell division topological specificity factor.